The following is a 279-amino-acid chain: NAD kinase (279 aa).

The Proton acceptor role is filled by Asp-57. NAD(+) contacts are provided by residues 57-58 (DG), 133-134 (NE), Arg-159, Asp-161, and 172-177 (TAYNKS).

The protein belongs to the NAD kinase family. Requires a divalent metal cation as cofactor.

The protein resides in the cytoplasm. The enzyme catalyses NAD(+) + ATP = ADP + NADP(+) + H(+). In terms of biological role, involved in the regulation of the intracellular balance of NAD and NADP, and is a key enzyme in the biosynthesis of NADP. Catalyzes specifically the phosphorylation on 2'-hydroxyl of the adenosine moiety of NAD to yield NADP. The chain is NAD kinase from Streptococcus pyogenes serotype M12 (strain MGAS2096).